The primary structure comprises 359 residues: Cysteine/Cysteine sulfinic acid decarboxylase (359 aa).

This sequence in the N-terminal section; belongs to the HFCD (homo-oligomeric flavin containing Cys decarboxylase) superfamily. The protein in the C-terminal section; belongs to the PPC synthetase family.

It catalyses the reaction L-cysteine + H(+) = cysteamine + CO2. The enzyme catalyses 3-sulfino-L-alanine + H(+) = hypotaurine + CO2. Slightly stimulated in the presence of 1 mM Mg(2+). In terms of biological role, catalyzes the decarboxylation of L-cysteine to cysteamine and of 3-sulfino-L-alanine (cysteine sulfinic acid) to hypotaurine. Also catalyzes the decarboxylation of various amino acids such as L-lysine, L-glutamate, L-asparaginate and L-proline. In vitro, shows highest activity with L-cysteine as substrate. This chain is Cysteine/Cysteine sulfinic acid decarboxylase, found in Unknown prokaryotic organism.